A 328-amino-acid chain; its full sequence is Isopenicillin N synthase (328 aa).

4 residues coordinate isopenicillin N: R85, Y89, S181, and Y187. 6 residues coordinate N-[(5S)-5-amino-5-carboxypentanoyl]-L-cysteinyl-D-valine: R85, Y89, S181, Y187, H210, and D212. The Fe2OG dioxygenase domain maps to 178-284 (TLSSVSLIRY…RLSLPFFFHA (107 aa)). Fe(2+) is bound by residues H210, D212, and H266. R275 contributes to the 2-oxoglutarate binding site. S277 is a binding site for isopenicillin N. S277 contacts N-[(5S)-5-amino-5-carboxypentanoyl]-L-cysteinyl-D-valine.

It belongs to the iron/ascorbate-dependent oxidoreductase family. Fe cation serves as cofactor. L-ascorbate is required as a cofactor.

It catalyses the reaction N-[(5S)-5-amino-5-carboxypentanoyl]-L-cysteinyl-D-valine + O2 = isopenicillin N + 2 H2O. Its pathway is antibiotic biosynthesis; penicillin G biosynthesis; penicillin G from L-alpha-aminoadipate and L-cysteine and L-valine: step 2/3. Removes, in the presence of oxygen, 4 hydrogen atoms from delta-L-(alpha-aminoadipyl)-L-cysteinyl-D-valine (ACV) to form the azetidinone and thiazolidine rings of isopenicillin. The chain is Isopenicillin N synthase (pcbC) from Amycolatopsis lactamdurans (Nocardia lactamdurans).